The primary structure comprises 154 residues: Aspartate 1-decarboxylase 1 (154 aa).

Ser26 acts as the Schiff-base intermediate with substrate; via pyruvic acid in catalysis. Ser26 carries the pyruvic acid (Ser) modification. Residue Thr58 coordinates substrate. The active-site Proton donor is the Tyr59. 74 to 76 (GAA) contacts substrate. The disordered stretch occupies residues 129 to 154 (VGLVRGDTNSPQPSLSEQAGDPRRAQ). Residues 135-145 (DTNSPQPSLSE) are compositionally biased toward polar residues.

The protein belongs to the PanD family. In terms of assembly, heterooctamer of four alpha and four beta subunits. It depends on pyruvate as a cofactor. Is synthesized initially as an inactive proenzyme, which is activated by self-cleavage at a specific serine bond to produce a beta-subunit with a hydroxyl group at its C-terminus and an alpha-subunit with a pyruvoyl group at its N-terminus.

The protein localises to the cytoplasm. It catalyses the reaction L-aspartate + H(+) = beta-alanine + CO2. It participates in cofactor biosynthesis; (R)-pantothenate biosynthesis; beta-alanine from L-aspartate: step 1/1. Functionally, catalyzes the pyruvoyl-dependent decarboxylation of aspartate to produce beta-alanine. The polypeptide is Aspartate 1-decarboxylase 1 (Frankia casuarinae (strain DSM 45818 / CECT 9043 / HFP020203 / CcI3)).